A 114-amino-acid polypeptide reads, in one-letter code: MLLKRLIKLAIFLFFVAVGFIIFIGSFWLNTYNTKEWANLLAEKDASGLIVQIIPNINQWFKGTVEQQQKLFQTLVHFFIPVGFGLLFGIAVAIIADLFYHLIKYLIKRSFKKN.

Helical transmembrane passes span 9–29 (LAIFLFFVAVGFIIFIGSFWL) and 75–95 (LVHFFIPVGFGLLFGIAVAII).

It is found in the cell membrane. This is an uncharacterized protein from Mycoplasma pneumoniae (strain ATCC 29342 / M129 / Subtype 1) (Mycoplasmoides pneumoniae).